We begin with the raw amino-acid sequence, 217 residues long: Tectonin-1 (217 aa).

A run of 6 repeats spans residues 2–37 (VHWE…HWDG), 38–74 (HKWH…DRSN), 75–111 (NKWT…DHHH), 112–146 (NKWD…RWDG), 147–182 (SKVD…LKHG), and 183–217 (KDWE…KATL). The 6 X approximate tandem repeats stretch occupies residues 2–217 (VHWEKHEGEL…KLHHIYKATL (216 aa)).

This sequence belongs to the tectonin family.

Its subcellular location is the cell surface. It localises to the cytoplasmic vesicle membrane. Its function is as follows. Probably involved in bacterial recognition. May be a lectin that function as part of a transmembrane signaling complex during phagocytosis. The protein is Tectonin-1 (TECA) of Physarum polycephalum (Slime mold).